Reading from the N-terminus, the 186-residue chain is ADP compounds hydrolase NudE (186 aa).

Glutamate 40 provides a ligand contact to substrate. A Nudix hydrolase domain is found at 45 to 172 (TNREAVMIVP…DFNEARNVSA (128 aa)). Positions 80 to 101 (GLIDPGESVYEAANRELKEEVG) match the Nudix box motif. A divalent metal cation-binding residues include glutamate 95 and glutamate 99. Serine 118 is a substrate binding site.

This sequence belongs to the Nudix hydrolase family. In terms of assembly, homodimer. Mg(2+) is required as a cofactor.

It catalyses the reaction ADP-D-ribose + H2O = D-ribose 5-phosphate + AMP + 2 H(+). Its function is as follows. Active on adenosine(5')triphospho(5')adenosine (Ap3A), ADP-ribose, NADH, adenosine(5')diphospho(5')adenosine (Ap2A). This Escherichia coli (strain K12) protein is ADP compounds hydrolase NudE (nudE).